The primary structure comprises 525 residues: Light-independent protochlorophyllide reductase subunit B (525 aa).

A [4Fe-4S] cluster-binding site is contributed by aspartate 36. Aspartate 292 functions as the Proton donor in the catalytic mechanism. Glycine 428–leucine 429 contacts substrate. The segment at proline 447 to glutamate 470 is disordered. The span at alanine 460–glutamate 470 shows a compositional bias: low complexity.

This sequence belongs to the ChlB/BchB/BchZ family. In terms of assembly, protochlorophyllide reductase is composed of three subunits; BchL, BchN and BchB. Forms a heterotetramer of two BchB and two BchN subunits. It depends on [4Fe-4S] cluster as a cofactor.

It carries out the reaction chlorophyllide a + oxidized 2[4Fe-4S]-[ferredoxin] + 2 ADP + 2 phosphate = protochlorophyllide a + reduced 2[4Fe-4S]-[ferredoxin] + 2 ATP + 2 H2O. It participates in porphyrin-containing compound metabolism; bacteriochlorophyll biosynthesis (light-independent). In terms of biological role, component of the dark-operative protochlorophyllide reductase (DPOR) that uses Mg-ATP and reduced ferredoxin to reduce ring D of protochlorophyllide (Pchlide) to form chlorophyllide a (Chlide). This reaction is light-independent. The NB-protein (BchN-BchB) is the catalytic component of the complex. The sequence is that of Light-independent protochlorophyllide reductase subunit B from Chlorobium luteolum (strain DSM 273 / BCRC 81028 / 2530) (Pelodictyon luteolum).